A 4599-amino-acid polypeptide reads, in one-letter code: Low-density lipoprotein receptor-related protein 1B (4599 aa).

The N-terminal stretch at 1–20 (MSEFLLALLTLSGLLPIARV) is a signal peptide. Residues 25-4444 (ADRDQQLCDP…KSDHISTRSI (4420 aa)) are Extracellular-facing. 2 LDL-receptor class A domains span residues 31-70 (LCDP…DTCP) and 76-114 (KCPL…VHCQ). Cystine bridges form between cysteine 32–cysteine 45, cysteine 39–cysteine 58, cysteine 52–cysteine 69, cysteine 77–cysteine 90, cysteine 84–cysteine 103, cysteine 97–cysteine 113, cysteine 120–cysteine 129, cysteine 125–cysteine 138, cysteine 140–cysteine 153, cysteine 159–cysteine 169, cysteine 165–cysteine 178, and cysteine 180–cysteine 193. One can recognise an EGF-like 1 domain in the interval 116 to 154 (LLSNCQQLNCQYKCTMVRNSTRCYCEDGFEITEDGRSCK). A glycan (N-linked (GlcNAc...) asparagine) is linked at asparagine 134. The EGF-like 2; calcium-binding domain occupies 155 to 194 (DQDECAVYGTCSQTCRNTHGSYTCSCVEGYLMQPDNRSCK). N-linked (GlcNAc...) asparagine glycans are attached at residues asparagine 190, asparagine 220, asparagine 313, and asparagine 360. LDL-receptor class B repeat units lie at residues 295–337 (RNLY…DPIA), 338–381 (GKLF…DLVN), and 382–425 (KLVY…FEDY). Asparagine 443 is a glycosylation site (N-linked (GlcNAc...) asparagine). The 47-residue stretch at 471–517 (RSHACEVDPYGMPGGCSHICLLSSSYKTRTCRCRTGFNLGSDGRSCK) folds into the EGF-like 3 domain. 4 LDL-receptor class B repeats span residues 568–610 (NYIY…DWIG), 611–656 (NNLY…DPVN), 657–706 (GWMY…DFHT), and 707–750 (NTLY…HGNY). 2 N-linked (GlcNAc...) asparagine glycosylation sites follow: asparagine 725 and asparagine 758. Positions 794–834 (GDNMCRVNNGGCSTLCLAIPGGRVCACADNQLLDENGTTCT) constitute an EGF-like 4 domain. 6 disulfide bridges follow: cysteine 798–cysteine 809, cysteine 805–cysteine 818, cysteine 820–cysteine 833, cysteine 845–cysteine 857, cysteine 852–cysteine 870, and cysteine 864–cysteine 881. An N-linked (GlcNAc...) asparagine glycan is attached at asparagine 829. Positions 844 to 882 (ICKAGEFRCKNRHCIQARWKCDGDDDCLDGSDEDSVNCF) constitute an LDL-receptor class A 3 domain. A glycan (N-linked (GlcNAc...) asparagine) is linked at asparagine 883. 7 consecutive LDL-receptor class A domains span residues 885 to 923 (SCPD…QTCT), 926 to 963 (TCQV…ASCE), 966 to 1003 (TCEP…VGCV), 1005 to 1043 (SCFD…INCT), 1052 to 1089 (GCNG…KGCN), 1094 to 1132 (LCDH…DDCD), and 1135 to 1174 (LCGP…YLCD). 15 cysteine pairs are disulfide-bonded: cysteine 886-cysteine 898, cysteine 893-cysteine 911, cysteine 905-cysteine 922, cysteine 927-cysteine 939, cysteine 934-cysteine 952, cysteine 946-cysteine 962, cysteine 967-cysteine 980, cysteine 975-cysteine 993, cysteine 987-cysteine 1002, cysteine 1006-cysteine 1018, cysteine 1013-cysteine 1031, cysteine 1025-cysteine 1042, cysteine 1053-cysteine 1066, cysteine 1060-cysteine 1079, and cysteine 1073-cysteine 1088. Asparagine 919 carries N-linked (GlcNAc...) asparagine glycosylation. The N-linked (GlcNAc...) asparagine glycan is linked to asparagine 1041. An N-linked (GlcNAc...) asparagine glycan is attached at asparagine 1089. 6 disulfides stabilise this stretch: cysteine 1095-cysteine 1109, cysteine 1103-cysteine 1122, cysteine 1116-cysteine 1131, cysteine 1136-cysteine 1150, cysteine 1143-cysteine 1163, and cysteine 1157-cysteine 1173. A glycan (N-linked (GlcNAc...) asparagine) is linked at asparagine 1145. EGF-like domains follow at residues 1174-1213 (DECS…KTCE) and 1214-1253 (IVDY…ESCT). A glycan (N-linked (GlcNAc...) asparagine) is linked at asparagine 1209. The N-linked (GlcNAc...) asparagine glycan is linked to asparagine 1298. LDL-receptor class B repeat units follow at residues 1300-1346 (SLLY…DWIA), 1347-1389 (GNIY…DPRY), 1390-1436 (GILF…DHFE), 1437-1480 (KRIV…LYGS), and 1481-1522 (EVYW…YHPS). Residues asparagine 1502, asparagine 1549, and asparagine 1636 are each glycosylated (N-linked (GlcNAc...) asparagine). Positions 1527-1570 (APNPCAANDGKGPCSHMCLINHNRSAACACPHLMKLSSDKKTCY) constitute an EGF-like 7 domain. 4 LDL-receptor class B repeats span residues 1618–1660 (ERLY…DWVS), 1661–1704 (RNLY…HPVR), 1705–1744 (GKLY…DYVE), and 1745–1787 (NKLY…TIMD). Asparagine 1754 and asparagine 1816 each carry an N-linked (GlcNAc...) asparagine glycan. The region spanning 1834 to 1875 (GSNSCQLNNGGCSQLCLPTSETTRTCMCTVGYYLQKNRMSCQ) is the EGF-like 8 domain. Intrachain disulfides connect cysteine 1838/cysteine 1849, cysteine 1845/cysteine 1859, and cysteine 1861/cysteine 1874. The N-linked (GlcNAc...) asparagine glycan is linked to asparagine 1921. LDL-receptor class B repeat units follow at residues 1922 to 1964 (DTIY…DWIA), 1965 to 2007 (GNIY…HPEK), 2008 to 2051 (GLLF…DYEE), and 2052 to 2095 (NKLY…FGAY). Residue asparagine 1983 is glycosylated (N-linked (GlcNAc...) asparagine). Asparagine 2105 is a glycosylation site (N-linked (GlcNAc...) asparagine). Positions 2143–2183 (GTNVCARDNGGCKQLCLYRGNSRRTCACAHGYLAEDGVTCL) constitute an EGF-like 9 domain. Disulfide bonds link cysteine 2147–cysteine 2158, cysteine 2154–cysteine 2168, and cysteine 2170–cysteine 2182. LDL-receptor class B repeat units follow at residues 2239–2280 (NRIF…HRAW), 2281–2329 (DTLY…DECQ), 2330–2374 (NLMF…DYRA), 2375–2416 (EKLY…VYDN), and 2417–2459 (YIFW…VAND). 3 N-linked (GlcNAc...) asparagine glycosylation sites follow: asparagine 2458, asparagine 2488, and asparagine 2507. Positions 2464–2504 (ELSPCALLNGGCHDLCLLTPNGRVNCSCRGDRILLEDNRCV) constitute an EGF-like 10 domain. In terms of domain architecture, LDL-receptor class A 11 spans 2509-2548 (SCNAYSEFECGNGECIDYQLTCDGIPHCKDKSDEKLLYCE). 3 cysteine pairs are disulfide-bonded: cysteine 2510/cysteine 2523, cysteine 2518/cysteine 2536, and cysteine 2530/cysteine 2547. Asparagine 2549 is a glycosylation site (N-linked (GlcNAc...) asparagine). LDL-receptor class A domains lie at 2551 to 2587 (SCRR…LDCK), 2590 to 2626 (TCAT…KNCN), 2629 to 2675 (DCTH…LKCP), 2681 to 2717 (KCEE…FHCD), 2719 to 2757 (SCSW…SICG), and 2760 to 2800 (TCAA…AGCA). Disulfide bonds link cysteine 2552–cysteine 2564, cysteine 2559–cysteine 2577, cysteine 2571–cysteine 2586, cysteine 2591–cysteine 2603, cysteine 2598–cysteine 2616, and cysteine 2610–cysteine 2625. N-linked (GlcNAc...) asparagine glycosylation is found at asparagine 2626 and asparagine 2647. Disulfide bonds link cysteine 2630/cysteine 2652, cysteine 2646/cysteine 2665, cysteine 2659/cysteine 2674, cysteine 2682/cysteine 2694, cysteine 2689/cysteine 2707, cysteine 2701/cysteine 2716, cysteine 2720/cysteine 2732, cysteine 2727/cysteine 2745, cysteine 2739/cysteine 2756, cysteine 2761/cysteine 2774, cysteine 2768/cysteine 2787, and cysteine 2781/cysteine 2799. Asparagine 2802 carries an N-linked (GlcNAc...) asparagine glycan. LDL-receptor class A domains are found at residues 2804-2841 (TCDE…PQCG), 2844-2885 (QCGT…PKCK), and 2890-2926 (SCNS…RNCH). Intrachain disulfides connect cysteine 2805–cysteine 2817, cysteine 2812–cysteine 2830, cysteine 2824–cysteine 2840, cysteine 2845–cysteine 2857, cysteine 2852–cysteine 2871, cysteine 2865–cysteine 2884, cysteine 2891–cysteine 2903, cysteine 2898–cysteine 2916, cysteine 2910–cysteine 2925, cysteine 2930–cysteine 2942, cysteine 2938–cysteine 2951, cysteine 2953–cysteine 2966, cysteine 2972–cysteine 2982, cysteine 2978–cysteine 2991, and cysteine 2993–cysteine 3007. Asparagine 2892 carries N-linked (GlcNAc...) asparagine glycosylation. Residues 2927 to 2967 (INECLSKKVSGCSQDCQDLPVSYKCKCWPGFQLKDDGKTCV) enclose the EGF-like 11 domain. One can recognise an EGF-like 12; calcium-binding domain in the interval 2968–3008 (DIDECSSGFPCSQQCINTYGTYKCLCTDGYEIQPDNPNGCK). N-linked (GlcNAc...) asparagine glycans are attached at residues asparagine 3034, asparagine 3066, and asparagine 3076. LDL-receptor class B repeat units lie at residues 3055-3098 (EFIY…DWIG), 3099-3141 (KNLY…DPQA), 3142-3185 (GYLY…DYVN), 3186-3224 (RRLY…TLFE), and 3225-3268 (DYIY…HSYR). An N-linked (GlcNAc...) asparagine glycan is attached at asparagine 3164. The region spanning 3273–3314 (SKHLCMINNGGCSHLCLLAPGKTHTCACPTNFYLAADNRTCL) is the EGF-like 13 domain. Residues asparagine 3310 and asparagine 3316 are each glycosylated (N-linked (GlcNAc...) asparagine). 12 consecutive LDL-receptor class A domains span residues 3316 to 3353 (NCTA…DDCP), 3356 to 3392 (RCQP…LNCD), 3395 to 3432 (VCLS…RDCP), 3435 to 3472 (SCSP…ANCD), 3475 to 3511 (TCGP…ENCK), 3514 to 3550 (TCTL…RNCE), 3552 to 3588 (SCSK…KSCE), 3593 to 3629 (TCSS…MDCV), 3631 to 3668 (ECKE…ENCE), 3673 to 3711 (ICRA…DMCV), 3714 to 3752 (LCPS…DHCG), and 3761 to 3797 (PCKK…QGCR). Intrachain disulfides connect cysteine 3317–cysteine 3329, cysteine 3324–cysteine 3342, cysteine 3336–cysteine 3352, cysteine 3357–cysteine 3369, cysteine 3364–cysteine 3382, cysteine 3376–cysteine 3391, cysteine 3396–cysteine 3409, cysteine 3403–cysteine 3422, cysteine 3416–cysteine 3431, cysteine 3436–cysteine 3449, cysteine 3443–cysteine 3462, cysteine 3456–cysteine 3471, cysteine 3476–cysteine 3488, cysteine 3483–cysteine 3501, cysteine 3495–cysteine 3510, cysteine 3515–cysteine 3527, cysteine 3522–cysteine 3540, cysteine 3534–cysteine 3549, cysteine 3553–cysteine 3565, cysteine 3560–cysteine 3578, cysteine 3572–cysteine 3587, cysteine 3594–cysteine 3606, cysteine 3601–cysteine 3619, cysteine 3613–cysteine 3628, cysteine 3632–cysteine 3645, cysteine 3639–cysteine 3658, cysteine 3652–cysteine 3667, cysteine 3674–cysteine 3686, cysteine 3681–cysteine 3699, cysteine 3693–cysteine 3710, cysteine 3715–cysteine 3729, cysteine 3723–cysteine 3742, cysteine 3736–cysteine 3751, cysteine 3762–cysteine 3774, cysteine 3769–cysteine 3787, cysteine 3781–cysteine 3796, cysteine 3805–cysteine 3818, cysteine 3812–cysteine 3827, cysteine 3829–cysteine 3842, cysteine 3848–cysteine 3858, cysteine 3854–cysteine 3867, and cysteine 3869–cysteine 3880. N-linked (GlcNAc...) asparagine glycosylation occurs at asparagine 3682. EGF-like domains are found at residues 3801–3843 (TEYT…RQCE) and 3844–3881 (DLNE…NTCI). N-linked (GlcNAc...) asparagine glycans are attached at residues asparagine 3877, asparagine 3894, and asparagine 3906. LDL-receptor class B repeat units follow at residues 3933–3980 (DMII…DWVA), 3981–4038 (GNIY…NPKR), 4039–4082 (GMMY…DYFS), and 4083–4127 (ERIY…FEDY). A glycan (N-linked (GlcNAc...) asparagine) is linked at asparagine 4017. EGF-like domains are found at residues 4171–4208 (DLPN…GTCN), 4213–4249 (LDDS…ERCE), 4249–4285 (EVNH…PNCG), 4285–4321 (GKTV…DRCQ), 4321–4357 (QYYV…PKCE), 4357–4392 (EVDK…SSCQ), and 4390–4427 (SCQL…TQCE). An N-linked (GlcNAc...) asparagine glycan is attached at asparagine 4204. Intrachain disulfides connect cysteine 4217–cysteine 4227, cysteine 4221–cysteine 4237, cysteine 4253–cysteine 4263, cysteine 4257–cysteine 4273, cysteine 4275–cysteine 4284, cysteine 4289–cysteine 4299, cysteine 4293–cysteine 4309, cysteine 4311–cysteine 4320, cysteine 4325–cysteine 4335, cysteine 4329–cysteine 4345, and cysteine 4347–cysteine 4356. N-linked (GlcNAc...) asparagine glycosylation is present at asparagine 4381. Intrachain disulfides connect cysteine 4394–cysteine 4404, cysteine 4398–cysteine 4415, and cysteine 4417–cysteine 4426. Asparagine 4420 is a glycosylation site (N-linked (GlcNAc...) asparagine). A helical transmembrane segment spans residues 4445 to 4467 (AIIVPLVLLVTLITTLVIGLVLC). Topologically, residues 4468–4599 (KRKRRTKTIR…IEIGIRETVA (132 aa)) are cytoplasmic. 2 consecutive short sequence motifs (endocytosis signal) follow at residues 4492 to 4495 (NPSY) and 4559 to 4562 (NPVY).

This sequence belongs to the LDLR family. In terms of assembly, binds LRPAP1, PLAU, PLAT and SERPINE1; binding is followed by internalization and degradation of the ligands. As to expression, expressed in thyroid gland and in salivary gland, as well as in adult and fetal brain.

It localises to the membrane. Functionally, potential cell surface proteins that bind and internalize ligands in the process of receptor-mediated endocytosis. In Homo sapiens (Human), this protein is Low-density lipoprotein receptor-related protein 1B (LRP1B).